The sequence spans 192 residues: T-cell surface glycoprotein CD3 epsilon chain (192 aa).

A signal peptide spans 1 to 21; that stretch reads MQTGNLWQVLGLCLLLVGAWA. Residues 22–111 are Extracellular-facing; it reads QDDTEQNPYE…RVCKNCMEVN (90 aa). The Ig-like domain maps to 27–98; that stretch reads QNPYEVSISG…GNTEAAHTLY (72 aa). Cys-43 and Cys-84 are joined by a disulfide. A helical membrane pass occupies residues 112–137; sequence LLEVATIIVVDICVTLGLLLLVYYWS. Over 138-192 the chain is Cytoplasmic; that stretch reads KSRKAKATPMTRGAGAGGRPRGQNRERPPPVPNPDYEPIRKGQRDLYSGLNQRGV. The interval 146-192 is disordered; it reads PMTRGAGAGGRPRGQNRERPPPVPNPDYEPIRKGQRDLYSGLNQRGV. Residues 160–177 form an NUMB-binding region region; sequence QNRERPPPVPNPDYEPIR. An ITAM domain is found at 163–190; that stretch reads ERPPPVPNPDYEPIRKGQRDLYSGLNQR. The interval 164–171 is proline-rich sequence; sequence RPPPVPNP. A phosphotyrosine mark is found at Tyr-173 and Tyr-184.

In terms of assembly, the TCR-CD3 complex is composed of a CD3D/CD3E and a CD3G/CD3E heterodimers that preferentially associate with TCRalpha and TCRbeta, respectively, to form TCRalpha/CD3E/CD3G and TCRbeta/CD3G/CD3E trimers. In turn, the hexamer interacts with CD3Z homodimer to form the TCR-CD3 complex. Alternatively, TCRalpha and TCRbeta can be replaced by TCRgamma and TCRdelta. Interacts with CD6. Interacts (via Proline-rich sequence) with NCK1; the interaction is ligand dependent but independent of tyrosine kinase activation. In terms of processing, phosphorylated on Tyr residues after T-cell receptor triggering by LCK in association with CD4/CD8.

The protein resides in the cell membrane. Its function is as follows. Part of the TCR-CD3 complex present on T-lymphocyte cell surface that plays an essential role in adaptive immune response. When antigen presenting cells (APCs) activate T-cell receptor (TCR), TCR-mediated signals are transmitted across the cell membrane by the CD3 chains CD3D, CD3E, CD3G and CD3Z. All CD3 chains contain immunoreceptor tyrosine-based activation motifs (ITAMs) in their cytoplasmic domain. Upon TCR engagement, these motifs become phosphorylated by Src family protein tyrosine kinases LCK and FYN, resulting in the activation of downstream signaling pathways. In addition of this role of signal transduction in T-cell activation, CD3E plays an essential role in correct T-cell development. Also participates in internalization and cell surface down-regulation of TCR-CD3 complexes via endocytosis sequences present in CD3E cytosolic region. In addition to its role as a TCR coreceptor, it serves as a receptor for ITPRIPL1. Ligand recognition inhibits T-cell activation by promoting interaction with NCK1, which prevents CD3E-ZAP70 interaction and blocks the ERK-NFkB signaling cascade and calcium influx. The sequence is that of T-cell surface glycoprotein CD3 epsilon chain (CD3E) from Ovis aries (Sheep).